The following is a 740-amino-acid chain: ATP-dependent RNA helicase DBP4 (740 aa).

Positions 1–37 are disordered; it reads MKKRADPRKIKREEHKQKLSKLQERVDNFGEDEADKE. Over residues 7 to 28 the composition is skewed to basic and acidic residues; it reads PRKIKREEHKQKLSKLQERVDN. The short motif at 39 to 67 is the Q motif element; it reads SKFEELPLSEATIEGLKNSHYVTCTDVQK. The Helicase ATP-binding domain maps to 70–244; the sequence is IPPALQGHDL…RLSLADPKYI (175 aa). 83-90 serves as a coordination point for ATP; that stretch reads ARTGSGKT. A DEAD box motif is present at residues 192–195; that stretch reads DEAD. The 165-residue stretch at 257-421 folds into the Helicase C-terminal domain; it reads NLEQNYVCVE…TIRPNKKKSI (165 aa). A disordered region spans residues 565–740; sequence RQDHNLESDD…ESLTSKLLKK (176 aa). Residues 636–662 show a composition bias toward basic and acidic residues; that stretch reads QVKEFVDRETKDMEEADVGDKELVKQK. Acidic residues-rich tracts occupy residues 680–695 and 709–731; these read DEYD…SEEE and SSDE…EDLE.

The protein belongs to the DEAD box helicase family. DDX10/DBP4 subfamily. As to quaternary structure, interacts with the U3 and U14 snoRNAs. Associates with pre-ribosomal complexes.

Its subcellular location is the nucleus. The protein resides in the nucleolus. The enzyme catalyses ATP + H2O = ADP + phosphate + H(+). ATP-dependent RNA helicase required for ribosome biogenesis. Involved in the release of U14 snoRNA in pre-ribosomal complexes. Required for pre-rRNA cleavage at site A2. The chain is ATP-dependent RNA helicase DBP4 (DBP4) from Yarrowia lipolytica (strain CLIB 122 / E 150) (Yeast).